We begin with the raw amino-acid sequence, 118 residues long: Large ribosomal subunit protein uL22 (118 aa).

Belongs to the universal ribosomal protein uL22 family. Part of the 50S ribosomal subunit.

This protein binds specifically to 23S rRNA; its binding is stimulated by other ribosomal proteins, e.g. L4, L17, and L20. It is important during the early stages of 50S assembly. It makes multiple contacts with different domains of the 23S rRNA in the assembled 50S subunit and ribosome. Functionally, the globular domain of the protein is located near the polypeptide exit tunnel on the outside of the subunit, while an extended beta-hairpin is found that lines the wall of the exit tunnel in the center of the 70S ribosome. The chain is Large ribosomal subunit protein uL22 from Leuconostoc citreum (strain KM20).